The chain runs to 270 residues: tRNA (guanine-N(1)-)-methyltransferase (270 aa).

Residues Gly117 and 137-142 contribute to the S-adenosyl-L-methionine site; that span reads IGDYVL.

Belongs to the RNA methyltransferase TrmD family. In terms of assembly, homodimer.

The protein resides in the cytoplasm. The catalysed reaction is guanosine(37) in tRNA + S-adenosyl-L-methionine = N(1)-methylguanosine(37) in tRNA + S-adenosyl-L-homocysteine + H(+). Functionally, specifically methylates guanosine-37 in various tRNAs. This is tRNA (guanine-N(1)-)-methyltransferase from Heliobacterium modesticaldum (strain ATCC 51547 / Ice1).